The primary structure comprises 377 residues: Malate dehydrogenase, cytoplasmic (377 aa).

The short motif at 2–5 (PHSV) is the Pro/N-degron element. Phosphothreonine is present on Thr-6. Residues 20-26 (GAAGGIG) and Asp-57 each bind NAD(+). Substrate contacts are provided by Arg-106 and Arg-112. NAD(+) contacts are provided by residues Asn-119 and 144 to 146 (ISN). Residues Asn-146 and Arg-185 each coordinate substrate. His-215 serves as the catalytic Proton acceptor. Position 266 (Met-266) interacts with NAD(+).

The protein belongs to the LDH/MDH superfamily. MDH type 1 family. As to quaternary structure, homodimer. Targeted for proteasomal degradation when cells are shifted to glucose-containing growth medium.

The protein localises to the cytoplasm. It catalyses the reaction (S)-malate + NAD(+) = oxaloacetate + NADH + H(+). In terms of biological role, the isoenzyme MDH2 may function primarily in the glyoxylate cycle. This Saccharomyces cerevisiae (strain ATCC 204508 / S288c) (Baker's yeast) protein is Malate dehydrogenase, cytoplasmic (MDH2).